Reading from the N-terminus, the 570-residue chain is Sulfite reductase [NADPH] hemoprotein beta-component (570 aa).

Residues C434, C440, C479, and C483 each contribute to the [4Fe-4S] cluster site. C483 is a binding site for siroheme.

It belongs to the nitrite and sulfite reductase 4Fe-4S domain family. As to quaternary structure, alpha(8)-beta(8). The alpha component is a flavoprotein, the beta component is a hemoprotein. Siroheme serves as cofactor. Requires [4Fe-4S] cluster as cofactor.

It catalyses the reaction hydrogen sulfide + 3 NADP(+) + 3 H2O = sulfite + 3 NADPH + 4 H(+). It functions in the pathway sulfur metabolism; hydrogen sulfide biosynthesis; hydrogen sulfide from sulfite (NADPH route): step 1/1. Functionally, component of the sulfite reductase complex that catalyzes the 6-electron reduction of sulfite to sulfide. This is one of several activities required for the biosynthesis of L-cysteine from sulfate. This Salmonella paratyphi B (strain ATCC BAA-1250 / SPB7) protein is Sulfite reductase [NADPH] hemoprotein beta-component.